The chain runs to 673 residues: UvrABC system protein B (673 aa).

The 389-residue stretch at 26–414 (EGLEDGLAHQ…GDEVVDQVVR (389 aa)) folds into the Helicase ATP-binding domain. 39 to 46 (GVTGSGKT) is an ATP binding site. Residues 92-115 (YYDYYQPEAYVPSSDTFIEKDASI) carry the Beta-hairpin motif. One can recognise a Helicase C-terminal domain in the interval 431–597 (QVDDLLSEIR…GLNKKVVDIL (167 aa)). The UVR domain maps to 633–668 (QQKIHELEGQMMQHAQNLEFEEAAQIRDQLHQLREL).

The protein belongs to the UvrB family. Forms a heterotetramer with UvrA during the search for lesions. Interacts with UvrC in an incision complex.

The protein resides in the cytoplasm. Functionally, the UvrABC repair system catalyzes the recognition and processing of DNA lesions. A damage recognition complex composed of 2 UvrA and 2 UvrB subunits scans DNA for abnormalities. Upon binding of the UvrA(2)B(2) complex to a putative damaged site, the DNA wraps around one UvrB monomer. DNA wrap is dependent on ATP binding by UvrB and probably causes local melting of the DNA helix, facilitating insertion of UvrB beta-hairpin between the DNA strands. Then UvrB probes one DNA strand for the presence of a lesion. If a lesion is found the UvrA subunits dissociate and the UvrB-DNA preincision complex is formed. This complex is subsequently bound by UvrC and the second UvrB is released. If no lesion is found, the DNA wraps around the other UvrB subunit that will check the other stand for damage. This is UvrABC system protein B from Salmonella paratyphi A (strain ATCC 9150 / SARB42).